The sequence spans 483 residues: Glutamate--tRNA ligase (483 aa).

The 'HIGH' region signature appears at 11-21 (PSPTGHLHIGN). Zn(2+) is bound by residues cysteine 108, cysteine 110, cysteine 135, and histidine 137. The 'KMSKS' region signature appears at 252 to 256 (KLSKR). Lysine 255 contacts ATP.

Belongs to the class-I aminoacyl-tRNA synthetase family. Glutamate--tRNA ligase type 1 subfamily. In terms of assembly, monomer. Requires Zn(2+) as cofactor.

The protein resides in the cytoplasm. The enzyme catalyses tRNA(Glu) + L-glutamate + ATP = L-glutamyl-tRNA(Glu) + AMP + diphosphate. Functionally, catalyzes the attachment of glutamate to tRNA(Glu) in a two-step reaction: glutamate is first activated by ATP to form Glu-AMP and then transferred to the acceptor end of tRNA(Glu). In Bacillus pumilus (strain SAFR-032), this protein is Glutamate--tRNA ligase.